We begin with the raw amino-acid sequence, 283 residues long: Probable endonuclease 4 (283 aa).

His69, His109, Glu145, Asp179, His182, His216, Asp229, His231, and Glu261 together coordinate Zn(2+).

Belongs to the AP endonuclease 2 family. Requires Zn(2+) as cofactor.

It catalyses the reaction Endonucleolytic cleavage to 5'-phosphooligonucleotide end-products.. Endonuclease IV plays a role in DNA repair. It cleaves phosphodiester bonds at apurinic or apyrimidinic (AP) sites, generating a 3'-hydroxyl group and a 5'-terminal sugar phosphate. The chain is Probable endonuclease 4 from Campylobacter concisus (strain 13826).